The primary structure comprises 408 residues: MSNIWLYFVPPIAGGIIGYFTNDIAIKMLFRPYRPYYIFRRKLPFTPGLIPANQERLAKRVADTIMGSLLTPSELQNLARRLLQTERMEAAILWLLQMSLDQLKLNTDTKSTKILANILRDLLGQSLPRLLKVWAKREYFLEAQINQIFDQILLEFQLTEIQAAQLSDWLLKVVVPPDVLRKTLIDFLTDQNISIIDEGFREKASGTYWVVANLFGLRNTLTRLRTFCLDERDLTNQRLMELITALAVKERITEWLHSLSMQNLPVSTVRELRNTMQNSVRLYLQENGTDLIQALSLSVAWEHIADLIINRLQASSIMNSSLELVSRELALILERYLERDLENIVALAIPILNIDQVIIDRIKGTSAEELEVAVNVIVKNELQAIVNLGGVLGVVVGSFQTILLVLQR.

The next 2 membrane-spanning stretches (helical) occupy residues 4-24 and 385-405; these read IWLY…TNDI and IVNL…ILLV.

The protein belongs to the UPF0754 family.

Its subcellular location is the cell inner membrane. The protein is UPF0754 membrane protein Tery_3973 of Trichodesmium erythraeum (strain IMS101).